The chain runs to 448 residues: Hydroxycinnamoyl-CoA:piscidic acid hydroxycinnamoyltransferase (448 aa).

Residues His-153 and Asp-395 each act as proton acceptor in the active site.

This sequence belongs to the plant acyltransferase family. In terms of tissue distribution, highly expressed in root and rhizome. Expressed in senescent leaf and callus tissues. Expressed in detached leaf treated for 18 hours with ethephon, methyl jasmonate, salicylic acid or illuminated for 24 hours with UV light. Not expressed in mature leaf. Expressed at low levels in leaves and flowers.

The catalysed reaction is (2R,3S)-piscidate + (E)-4-coumaroyl-CoA = cimicifugate K + CoA. It carries out the reaction (2R,3S)-piscidate + (E)-caffeoyl-CoA = cimicifugate D + CoA. It catalyses the reaction (2R,3S)-piscidate + (E)-sinapoyl-CoA = cimicifugate J + CoA. The enzyme catalyses (2R,3S)-piscidate + (E)-feruloyl-CoA = cimicifugate E + CoA. The protein operates within phenylpropanoid metabolism. In terms of biological role, catalyzes the formation of cimicifugic acids. Uses hydroxycinnamoyl-CoA thioesters as hydroxycinnamoyl donor substrates. Has a strict specificity for piscidic acid as an acceptor substrate as none of the various other acceptors tested including 4-hydroxyphenyllactic acid, malate, spermidine or tetrahydroxyhexanedioic acid are substrates. Donor substrates include 4-coumaroyl-CoA, caffeoyl-CoA, sinapoyl-CoA and feruloyl-CoA. No activity with cinnamoyl-CoA, isoferuloyl-CoA, 3,4-dimethoxycinnamoyl-CoA or 3,4-dihydroxybenzoyl-CoA as donors. In the reverse reaction with fukinolic acid and CoA as substrates, a formation of fukiic acid is evident. Hence, fukiic acid may also serve as an acceptor substrate. Involved in the biosynthesis of cimicifugic and possibly fukinolic acids. The polypeptide is Hydroxycinnamoyl-CoA:piscidic acid hydroxycinnamoyltransferase (Actaea racemosa (Black cohosh)).